The sequence spans 125 residues: uncharacterized protein (125 aa).

The region spanning 19–73 (IYSLRLAKGLSRQQLAEVIDVTHQQLQKYEKAINRISVGRLVLIAEALDRNIDYF) is the HTH cro/C1-type domain. Residues 30-49 (RQQLAEVIDVTHQQLQKYEK) constitute a DNA-binding region (H-T-H motif).

This is an uncharacterized protein from Rickettsia conorii (strain ATCC VR-613 / Malish 7).